We begin with the raw amino-acid sequence, 411 residues long: LL-diaminopimelate aminotransferase (411 aa).

Positions 15 and 42 each coordinate substrate. Residues tyrosine 72, 105–106, tyrosine 129, asparagine 186, tyrosine 217, and 245–247 each bind pyridoxal 5'-phosphate; these read SK and SFS. The substrate site is built by lysine 106, tyrosine 129, and asparagine 186. At lysine 248 the chain carries N6-(pyridoxal phosphate)lysine. Pyridoxal 5'-phosphate contacts are provided by arginine 256 and asparagine 287. Substrate is bound by residues asparagine 287 and arginine 382.

Belongs to the class-I pyridoxal-phosphate-dependent aminotransferase family. LL-diaminopimelate aminotransferase subfamily. Homodimer. Requires pyridoxal 5'-phosphate as cofactor.

It catalyses the reaction (2S,6S)-2,6-diaminopimelate + 2-oxoglutarate = (S)-2,3,4,5-tetrahydrodipicolinate + L-glutamate + H2O + H(+). Its pathway is amino-acid biosynthesis; L-lysine biosynthesis via DAP pathway; LL-2,6-diaminopimelate from (S)-tetrahydrodipicolinate (aminotransferase route): step 1/1. Functionally, involved in the synthesis of meso-diaminopimelate (m-DAP or DL-DAP), required for both lysine and peptidoglycan biosynthesis. Catalyzes the direct conversion of tetrahydrodipicolinate to LL-diaminopimelate. Is also able to use meso-diaminopimelate, lysine or ornithine as substrates. The polypeptide is LL-diaminopimelate aminotransferase (Protochlamydia amoebophila (strain UWE25)).